Consider the following 330-residue polypeptide: Growth hormone-regulated TBC protein 6 (330 aa).

Positions 78-256 (GIPHTFRKEL…RLWDCLIYEG (179 aa)) constitute a Rab-GAP TBC domain.

The chain is Growth hormone-regulated TBC protein 6 (tbc-6) from Caenorhabditis elegans.